The following is a 194-amino-acid chain: Protein ORF31 (194 aa).

Positions 1–25 are cleaved as a signal peptide; that stretch reads MKSVASPLCQFHGVFCLYQCRQCLA.

The protein belongs to the herpesviridae UL92 family. Interacts with ORF34.

It is found in the host nucleus. Its subcellular location is the host cytoplasm. Its function is as follows. Plays an important role in the expression of late genes. May play a role in viral replication. In Homo sapiens (Human), this protein is Protein ORF31 (ORF31).